Consider the following 736-residue polypeptide: 1,4-alpha-glucan branching enzyme GlgB (736 aa).

Asp-415 acts as the Nucleophile in catalysis. Residue Glu-470 is the Proton donor of the active site.

Belongs to the glycosyl hydrolase 13 family. GlgB subfamily. As to quaternary structure, monomer.

The enzyme catalyses Transfers a segment of a (1-&gt;4)-alpha-D-glucan chain to a primary hydroxy group in a similar glucan chain.. It functions in the pathway glycan biosynthesis; glycogen biosynthesis. Its function is as follows. Catalyzes the formation of the alpha-1,6-glucosidic linkages in glycogen by scission of a 1,4-alpha-linked oligosaccharide from growing alpha-1,4-glucan chains and the subsequent attachment of the oligosaccharide to the alpha-1,6 position. In Burkholderia orbicola (strain AU 1054), this protein is 1,4-alpha-glucan branching enzyme GlgB.